The sequence spans 200 residues: Lipopolysaccharide core heptose(II)-phosphate phosphatase (200 aa).

The signal sequence occupies residues 1 to 25 (MLAFCRSSLKSKKYIIILLALAAIA).

This sequence belongs to the phosphoglycerate mutase family. Ais subfamily.

The protein resides in the periplasm. It participates in bacterial outer membrane biogenesis; lipopolysaccharide metabolism. Catalyzes the dephosphorylation of heptose(II) of the outer membrane lipopolysaccharide core. In Escherichia coli (strain ATCC 8739 / DSM 1576 / NBRC 3972 / NCIMB 8545 / WDCM 00012 / Crooks), this protein is Lipopolysaccharide core heptose(II)-phosphate phosphatase.